We begin with the raw amino-acid sequence, 416 residues long: Caspase-9 (416 aa).

Residues 1–92 (MDEADRRLLR…DMLASFLRTN (92 aa)) form the CARD domain. T125 carries the post-translational modification Phosphothreonine; by MAPK1. Phosphotyrosine; by ABL1 is present on Y153. Catalysis depends on residues H237 and C287. Residues 294–320 (HGFEVASTSPEDESPGSNPEPDATPFQ) form a disordered region. A phosphoserine mark is found at S302, S307, and S310. Residues 316-330 (ATPFQEGLRTFDQLD) constitute a propeptide that is removed on maturation. R355 is subject to (Microbial infection) ADP-riboxanated arginine.

Belongs to the peptidase C14A family. Heterotetramer that consists of two anti-parallel arranged heterodimers, each one formed by a 35 kDa (p35) and a 10 kDa (p10) subunit. Caspase-9 and APAF1 bind to each other via their respective NH2-terminal CED-3 homologous domains in the presence of cytochrome C and ATP. Interacts (inactive form) with EFHD2. Interacts with HAX1. Interacts with BIRC2/c-IAP1, XIAP/BIRC4, BIRC5/survivin, BIRC6/bruce and BIRC7/livin. Interacts with ABL1 (via SH3 domain); the interaction is direct and increases in the response of cells to genotoxic stress and ABL1/c-Abl activation. Interacts with BCL2L10. Interacts with NleF from pathogenic E.coli. Post-translationally, cleavages at Asp-315 by granzyme B and at Asp-330 by caspase-3 generate the two active subunits. Caspase-8 and -10 can also be involved in these processing events. In terms of processing, phosphorylated at Thr-125 by MAPK1/ERK2. Phosphorylation at Thr-125 is sufficient to block caspase-9 processing and subsequent caspase-3 activation. Phosphorylation on Tyr-153 by ABL1/c-Abl; occurs in the response of cells to DNA damage. (Microbial infection) ADP-riboxanation by C.violaceum CopC blocks CASP9 processing, preventing CASP9 activation and ability to mediate intrinsic apoptosis. Post-translationally, ubiquitinated by BIRC6; this activity is inhibited by DIABLO/SMAC. In terms of tissue distribution, ubiquitous, with highest expression in the heart, moderate expression in liver, skeletal muscle, and pancreas. Low levels in all other tissues. Within the heart, specifically expressed in myocytes.

It carries out the reaction Strict requirement for an Asp residue at position P1 and with a marked preference for His at position P2. It has a preferred cleavage sequence of Leu-Gly-His-Asp-|-Xaa.. Its activity is regulated as follows. Inhibited by the effector protein NleF that is produced by pathogenic E.coli; this inhibits apoptosis. Inhibited by BIRC6; following inhibition of BIRC6-caspase binding by DIABLO/SMAC, BIRC6 is subjected to caspase cleavage, leading to an increase in active caspases. Its function is as follows. Involved in the activation cascade of caspases responsible for apoptosis execution. Binding of caspase-9 to Apaf-1 leads to activation of the protease which then cleaves and activates effector caspases caspase-3 (CASP3) or caspase-7 (CASP7). Promotes DNA damage-induced apoptosis in a ABL1/c-Abl-dependent manner. Proteolytically cleaves poly(ADP-ribose) polymerase (PARP). Cleaves BIRC6 following inhibition of BIRC6-caspase binding by DIABLO/SMAC. In terms of biological role, lacks activity is an dominant-negative inhibitor of caspase-9. The protein is Caspase-9 (CASP9) of Homo sapiens (Human).